A 190-amino-acid polypeptide reads, in one-letter code: D-glycero-beta-D-manno-heptose-1,7-bisphosphate 7-phosphatase (190 aa).

Asp-11 functions as the Nucleophile in the catalytic mechanism. Asp-11 and Asp-13 together coordinate Mg(2+). Substrate is bound by residues 11 to 13, 19 to 22, and 53 to 56; these read DRD, DHGY, and TNQS. Asp-13 (proton donor) is an active-site residue. Residues Cys-92, His-94, Cys-107, and Cys-109 each coordinate Zn(2+). 110–111 is a binding site for substrate; that stretch reads RK. Mg(2+)-binding residues include Asp-136 and Lys-137. Lys-137 is a binding site for substrate.

The protein belongs to the GmhB family. Monomer. Mg(2+) is required as a cofactor. Zn(2+) serves as cofactor.

The protein localises to the cytoplasm. It catalyses the reaction D-glycero-beta-D-manno-heptose 1,7-bisphosphate + H2O = D-glycero-beta-D-manno-heptose 1-phosphate + phosphate. The protein operates within nucleotide-sugar biosynthesis; ADP-L-glycero-beta-D-manno-heptose biosynthesis; ADP-L-glycero-beta-D-manno-heptose from D-glycero-beta-D-manno-heptose 7-phosphate: step 2/4. It participates in bacterial outer membrane biogenesis; LPS core biosynthesis. Its function is as follows. Converts the D-glycero-beta-D-manno-heptose 1,7-bisphosphate intermediate into D-glycero-beta-D-manno-heptose 1-phosphate by removing the phosphate group at the C-7 position. The protein is D-glycero-beta-D-manno-heptose-1,7-bisphosphate 7-phosphatase (gmhB) of Escherichia coli O6:H1 (strain CFT073 / ATCC 700928 / UPEC).